The following is a 501-amino-acid chain: MLO-like protein 5 (501 aa).

At 1–22 (MAGGGGGSTSGEGPRELDQTPT) the chain is on the extracellular side. The helical transmembrane segment at 23–43 (WAVSTVCGVIILISIVLELMI) threads the bilayer. The Cytoplasmic portion of the chain corresponds to 44–68 (HKIGEVFTERRKKALYEALQKIKNE). A helical membrane pass occupies residues 69-89 (LMVLGFISLLLTFGQNYIASL). Topologically, residues 90–151 (CVASRYGHAM…ISLNALHQVH (62 aa)) are extracellular. A helical transmembrane segment spans residues 152 to 172 (IFIFFLAVFHVIYSAITMMLG). The Cytoplasmic segment spans residues 173–273 (RAKIRGWKVW…IKRSLEDDFK (101 aa)). The helical transmembrane segment at 274–294 (VVVGISPELWAFVMLFLLFDV) threads the bilayer. A topological domain (extracellular) is located at residue histidine 295. A helical transmembrane segment spans residues 296-316 (GWYVTAVITMIPPLLTLAIGT). The Cytoplasmic portion of the chain corresponds to 317 to 359 (KLQAIISDMALEIQERHAVIQGMPLVNVSDRHFWFSRPALVLH). The helical transmembrane segment at 360–380 (IIHFILFQNAFEITYFFWIWY) threads the bilayer. Residues 381-391 (EFGLRSCFHHH) lie on the Extracellular side of the membrane. The helical transmembrane segment at 392–412 (FALIIIRVALGVGVQFLCSYI) threads the bilayer. Residues 413–501 (TLPLYALVTQ…SQSRDLLSGP (89 aa)) are Cytoplasmic-facing. Residues 443–501 (WHKNAKKKSETPGQTQPPLPNLRPKTGGDIESASPANITASVDVKESDQSQSRDLLSGP) form a disordered region. Residues 450-471 (KSETPGQTQPPLPNLRPKTGGD) form a calmodulin-binding region. Over residues 491-501 (QSQSRDLLSGP) the composition is skewed to polar residues.

Belongs to the MLO family.

The protein localises to the membrane. May be involved in modulation of pathogen defense and leaf cell death. Activity seems to be regulated by Ca(2+)-dependent calmodulin binding and seems not to require heterotrimeric G proteins. This is MLO-like protein 5 (MLO5) from Arabidopsis thaliana (Mouse-ear cress).